Consider the following 688-residue polypeptide: Sodium channel and clathrin linker 1 (688 aa).

N-acetylalanine is present on Ala-2. 2 coiled-coil regions span residues Leu-59 to Lys-108 and Gln-152 to Thr-673. A Phosphoserine modification is found at Ser-681.

In terms of assembly, interacts with SCN10A and clathrin. Identified in a complex containing SCN10A, clathrin and SCLT1.

The protein localises to the cytoplasm. The protein resides in the cytoskeleton. It localises to the microtubule organizing center. Its subcellular location is the centrosome. It is found in the centriole. Adapter protein that links SCN10A to clathrin. Regulates SCN10A channel activity, possibly by promoting channel internalization. The protein is Sodium channel and clathrin linker 1 (Sclt1) of Mus musculus (Mouse).